Here is a 296-residue protein sequence, read N- to C-terminus: Polyamine aminopropyltransferase (296 aa).

One can recognise a PABS domain in the interval 16-251; that stretch reads HLWYFEYYTG…GMWSYTFASK (236 aa). Glutamine 46 is a binding site for S-methyl-5'-thioadenosine. Histidine 77 and aspartate 101 together coordinate spermidine. Residues glutamate 121 and 152–153 contribute to the S-methyl-5'-thioadenosine site; that span reads NG. The active-site Proton acceptor is aspartate 170. 170-173 provides a ligand contact to spermidine; sequence DSTD.

It belongs to the spermidine/spermine synthase family. As to quaternary structure, homotetramer.

The protein localises to the cytoplasm. The catalysed reaction is S-adenosyl 3-(methylsulfanyl)propylamine + putrescine = S-methyl-5'-thioadenosine + spermidine + H(+). Its pathway is amine and polyamine biosynthesis; spermidine biosynthesis; spermidine from putrescine: step 1/1. Its activity is regulated as follows. Strongly inhibited by S-adenosyl-1,8-diamino-3-thiooctane. In terms of biological role, catalyzes the irreversible transfer of a propylamine group from the amino donor S-adenosylmethioninamine (decarboxy-AdoMet) to putrescine (1,4-diaminobutane) to yield spermidine. It has lower affinity and lower activity towards 1,3-diaminopropane, cadaverine (1,5-diaminopentane), agmatine, norspermidine and spermidine (in vitro). This Thermotoga maritima (strain ATCC 43589 / DSM 3109 / JCM 10099 / NBRC 100826 / MSB8) protein is Polyamine aminopropyltransferase.